The chain runs to 129 residues: Prefoldin subunit 6 (129 aa).

At Ala2 the chain carries N-acetylalanine. N6-acetyllysine is present on Lys21. The residue at position 66 (Lys66) is an N6-acetyllysine; alternate. Lys66 participates in a covalent cross-link: Glycyl lysine isopeptide (Lys-Gly) (interchain with G-Cter in SUMO1); alternate. Lys66 is covalently cross-linked (Glycyl lysine isopeptide (Lys-Gly) (interchain with G-Cter in SUMO2); alternate).

It belongs to the prefoldin subunit beta family. As to quaternary structure, heterohexamer of two PFD-alpha type and four PFD-beta type subunits. Component of the PAQosome complex which is responsible for the biogenesis of several protein complexes and which consists of R2TP complex members RUVBL1, RUVBL2, RPAP3 and PIH1D1, URI complex members PFDN2, PFDN6, PDRG1, UXT and URI1 as well as ASDURF, POLR2E and DNAAF10/WDR92.

Functionally, binds specifically to cytosolic chaperonin (c-CPN) and transfers target proteins to it. Binds to nascent polypeptide chain and promotes folding in an environment in which there are many competing pathways for nonnative proteins. This chain is Prefoldin subunit 6 (PFDN6), found in Canis lupus familiaris (Dog).